A 122-amino-acid chain; its full sequence is NADH-quinone oxidoreductase subunit A (122 aa).

Helical transmembrane passes span 12–32 (IIIF…VNLI), 66–86 (LVAI…PWAI), and 91–111 (IGGL…VGFI).

Belongs to the complex I subunit 3 family. NDH-1 is composed of 14 different subunits. Subunits NuoA, H, J, K, L, M, N constitute the membrane sector of the complex.

Its subcellular location is the cell inner membrane. It catalyses the reaction a quinone + NADH + 5 H(+)(in) = a quinol + NAD(+) + 4 H(+)(out). NDH-1 shuttles electrons from NADH, via FMN and iron-sulfur (Fe-S) centers, to quinones in the respiratory chain. The immediate electron acceptor for the enzyme in this species is believed to be ubiquinone. Couples the redox reaction to proton translocation (for every two electrons transferred, four hydrogen ions are translocated across the cytoplasmic membrane), and thus conserves the redox energy in a proton gradient. This Pelagibacter ubique (strain HTCC1062) protein is NADH-quinone oxidoreductase subunit A.